A 388-amino-acid chain; its full sequence is Succinate--CoA ligase [ADP-forming] subunit beta (388 aa).

An ATP-grasp domain is found at Lys9–Leu244. Residues Lys46, Gly53–Gly55, Val102, and Glu107 each bind ATP. Mg(2+) contacts are provided by Asn199 and Asp213. Residues Asn264 and Gly321–Met323 each bind substrate.

The protein belongs to the succinate/malate CoA ligase beta subunit family. In terms of assembly, heterotetramer of two alpha and two beta subunits. Mg(2+) is required as a cofactor.

The enzyme catalyses succinate + ATP + CoA = succinyl-CoA + ADP + phosphate. It carries out the reaction GTP + succinate + CoA = succinyl-CoA + GDP + phosphate. It participates in carbohydrate metabolism; tricarboxylic acid cycle; succinate from succinyl-CoA (ligase route): step 1/1. In terms of biological role, succinyl-CoA synthetase functions in the citric acid cycle (TCA), coupling the hydrolysis of succinyl-CoA to the synthesis of either ATP or GTP and thus represents the only step of substrate-level phosphorylation in the TCA. The beta subunit provides nucleotide specificity of the enzyme and binds the substrate succinate, while the binding sites for coenzyme A and phosphate are found in the alpha subunit. The sequence is that of Succinate--CoA ligase [ADP-forming] subunit beta from Chlamydia caviae (strain ATCC VR-813 / DSM 19441 / 03DC25 / GPIC) (Chlamydophila caviae).